We begin with the raw amino-acid sequence, 151 residues long: MNVINNTLNIKKIFKILPHRYPFLLIDRVLNFEKFKYLQAIKNCSINEPYFQGHFSNEPVFPGVLIIESMAQAASILIYKSTGELNINKLYYFVGVDDTRFKKIAIPGDQIFIKVTILKSNKNILIFKNIAVVNNDIICKSKIVFAKKYLF.

H54 is an active-site residue.

This sequence belongs to the thioester dehydratase family. FabZ subfamily.

The protein localises to the cytoplasm. It catalyses the reaction a (3R)-hydroxyacyl-[ACP] = a (2E)-enoyl-[ACP] + H2O. Functionally, involved in unsaturated fatty acids biosynthesis. Catalyzes the dehydration of short chain beta-hydroxyacyl-ACPs and long chain saturated and unsaturated beta-hydroxyacyl-ACPs. The polypeptide is 3-hydroxyacyl-[acyl-carrier-protein] dehydratase FabZ (Buchnera aphidicola subsp. Acyrthosiphon pisum (strain 5A)).